The chain runs to 176 residues: MTTIVSVRRNGKVVMGGDGQVSLGNTVMKGNAKKVRRLYNGQVIAGFAGATADAFTLFERFEAQLQKHSGHLVRAAVELAKEWRTDRSLSRLEAMLAVANKDASLIITGNGDVVEPEDGLIAMGSGGGYAQAAARALLNKTDLSAREITEAALNIAGDICVFTNHNLTIEEQDLAE.

Thr2 is an active-site residue. Residues Gly157, Cys160, and Thr163 each coordinate Na(+).

It belongs to the peptidase T1B family. HslV subfamily. In terms of assembly, a double ring-shaped homohexamer of HslV is capped on each side by a ring-shaped HslU homohexamer. The assembly of the HslU/HslV complex is dependent on binding of ATP.

Its subcellular location is the cytoplasm. The catalysed reaction is ATP-dependent cleavage of peptide bonds with broad specificity.. Allosterically activated by HslU binding. Protease subunit of a proteasome-like degradation complex believed to be a general protein degrading machinery. This is ATP-dependent protease subunit HslV from Pseudomonas entomophila (strain L48).